Reading from the N-terminus, the 354-residue chain is RH-like protein (354 aa).

The next 8 membrane-spanning stretches (helical) occupy residues G11–F31, V45–L65, V77–F97, I125–V145, V167–L187, A209–T229, V238–L258, and L287–G307.

It belongs to the ammonium transporter (TC 2.A.49) family. Rh subfamily.

It localises to the membrane. May be part of an oligomeric complex which is likely to have a transport or channel function in the erythrocyte membrane. The protein is RH-like protein of Hylobates pileatus (Pileated gibbon).